The following is a 110-amino-acid chain: Disintegrin jerdostatin (110 aa).

The first 20 residues, 1 to 20 (MIQVLLVTICLAVFPYQVSS), serve as a signal peptide directing secretion. A propeptide spanning residues 21 to 67 (KTLKSGSVNEYEVVNPGTVTGLPKGAVKQPEKKHEPMKGNTLQKLPL) is cleaved from the precursor. The region spanning 27-110 (SVNEYEVVNP…CECPSYPGNG (84 aa)) is the Disintegrin domain. Disulfide bonds link Cys68-Cys77, Cys73-Cys96, Cys74-Cys101, and Cys86-Cys103. Residues 88-90 (RTS) carry the Cell attachment site; atypical (RTS) motif.

It belongs to the disintegrin family. Short disintegrin subfamily. In terms of assembly, monomer. Two conformers are found, they may differ by their disulfide bond connectivities. Conformer 2 is 33 times less active than conformer 1. Conformer 2 may represent a non-native protein. In terms of processing, the C-terminal dipeptide may be post-translationally removed, as seen in disintegrins that possess a KTS integrin-binding motif. Expressed by the venom gland.

It localises to the secreted. Recombinant protein inhibits the adhesion of alpha-1/beta-1-K562 (ITGA1/ITGB1) cells to collagen IV with an IC(50) of 80 nM. In Protobothrops jerdonii (Jerdon's pitviper), this protein is Disintegrin jerdostatin.